The sequence spans 111 residues: Nucleoid-associated protein glr3498 (111 aa).

This sequence belongs to the YbaB/EbfC family. As to quaternary structure, homodimer.

The protein resides in the cytoplasm. It is found in the nucleoid. In terms of biological role, binds to DNA and alters its conformation. May be involved in regulation of gene expression, nucleoid organization and DNA protection. This Gloeobacter violaceus (strain ATCC 29082 / PCC 7421) protein is Nucleoid-associated protein glr3498.